A 566-amino-acid polypeptide reads, in one-letter code: Tetratricopeptide repeat protein 34 (566 aa).

The disordered stretch occupies residues 1 to 29 (MLQRSPRAGPSRAQGRREAAETGGPTTQE). TPR repeat units follow at residues 50 to 83 (EASR…RPQA), 178 to 211 (SESL…EPGN), 212 to 245 (VQAL…GPGT), 306 to 339 (PHWH…APTS), 341 to 373 (AARA…DAPD), 424 to 457 (ACHL…ALGD), 464 to 497 (AEDF…APSL), and 512 to 545 (ARMF…DPDH).

The protein is Tetratricopeptide repeat protein 34 (TTC34) of Homo sapiens (Human).